A 185-amino-acid chain; its full sequence is ATP synthase subunit delta (185 aa).

The protein belongs to the ATPase delta chain family. F-type ATPases have 2 components, F(1) - the catalytic core - and F(0) - the membrane proton channel. F(1) has five subunits: alpha(3), beta(3), gamma(1), delta(1), epsilon(1). CF(0) has four main subunits: a(1), b(1), b'(1) and c(10-14). The alpha and beta chains form an alternating ring which encloses part of the gamma chain. F(1) is attached to F(0) by a central stalk formed by the gamma and epsilon chains, while a peripheral stalk is formed by the delta, b and b' chains.

The protein localises to the cellular thylakoid membrane. Its function is as follows. F(1)F(0) ATP synthase produces ATP from ADP in the presence of a proton or sodium gradient. F-type ATPases consist of two structural domains, F(1) containing the extramembraneous catalytic core and F(0) containing the membrane proton channel, linked together by a central stalk and a peripheral stalk. During catalysis, ATP synthesis in the catalytic domain of F(1) is coupled via a rotary mechanism of the central stalk subunits to proton translocation. Functionally, this protein is part of the stalk that links CF(0) to CF(1). It either transmits conformational changes from CF(0) to CF(1) or is implicated in proton conduction. This Synechocystis sp. (strain ATCC 27184 / PCC 6803 / Kazusa) protein is ATP synthase subunit delta.